A 1039-amino-acid polypeptide reads, in one-letter code: Probable inorganic carbon transporter subunit DabA 2 (1039 aa).

Residues cysteine 462, aspartate 464, histidine 721, and cysteine 736 each coordinate Zn(2+).

It belongs to the inorganic carbon transporter (TC 9.A.2) DabA family. Forms a complex with DabB. It depends on Zn(2+) as a cofactor.

Its subcellular location is the cell inner membrane. In terms of biological role, part of an energy-coupled inorganic carbon pump. This is Probable inorganic carbon transporter subunit DabA 2 from Nitrobacter hamburgensis (strain DSM 10229 / NCIMB 13809 / X14).